Consider the following 798-residue polypeptide: Bromodomain-containing protein 2 (798 aa).

Met1 carries the N-acetylmethionine modification. A disordered region spans residues 1–21 (MLQNVTPHKLPGEGNAGLLGL). Phosphothreonine is present on Thr6. Position 36 is a phosphoserine (Ser36). Residues 53–72 (LQLAPANPPPPEVSNPKKPG) are disordered. The Bromo 1 domain maps to 73–179 (RVTNQLQYLH…KIFLQKVASM (107 aa)). Asp111, Tyr154, Asn155, Lys156, Asp159, and Asp160 together coordinate a protein. 3 disordered regions span residues 267-348 (PPAQ…LSEQ), 455-648 (EPLE…KRQL), and 735-798 (EKRL…SDSG). Positions 284 to 297 (TTTPTPTAILAPGS) are enriched in low complexity. Ser297, Ser300, and Ser304 each carry phosphoserine. Residues 315 to 331 (MRRESGRPIKPPRKDLP) are compositionally biased toward basic and acidic residues. A Bromo 2 domain is found at 343–452 (GKLSEQLKHC…DVFEFRYAKM (110 aa)). Positions 480 to 512 (SSEESSSESSSEEEEEEDEEDEEEESESSDSEE) are enriched in acidic residues. The segment covering 542–564 (KPKRKREKKEKKKKRKAEKHRGR) has biased composition (basic residues). The Nuclear localization signal motif lies at 553-557 (KKKRK). Positions 630-712 (DSEEEEESRP…SCLRKKPRKP (83 aa)) constitute an NET domain. At Ser631 the chain carries Phosphoserine. The span at 637–648 (SRPMSYDEKRQL) shows a compositional bias: basic and acidic residues. Residues 772–792 (SASSSSSDSSSSSSSSSSSDT) show a composition bias toward low complexity.

The protein belongs to the BET family. As to quaternary structure, homodimer. Interacts with E2F1. Interacts with (acetylated) STAT3; promoting STAT3 recruitment to chromatin. Interacts with CTCF; promoting BRD2 recruitment to chromatin.

It localises to the nucleus. It is found in the chromosome. In terms of biological role, chromatin reader protein that specifically recognizes and binds histone H4 acetylated at 'Lys-5' and 'Lys-12' (H4K5ac and H4K12ac, respectively), thereby controlling gene expression and remodeling chromatin structures. Recruits transcription factors and coactivators to target gene sites, and activates RNA polymerase II machinery for transcriptional elongation. Plays a key role in genome compartmentalization via its association with CTCF and cohesin: recruited to chromatin by CTCF and promotes formation of topologically associating domains (TADs) via its ability to bind acetylated histones, contributing to CTCF boundary formation and enhancer insulation. Also recognizes and binds acetylated non-histone proteins, such as STAT3. Involved in inflammatory response by regulating differentiation of naive CD4(+) T-cells into T-helper Th17: recognizes and binds STAT3 acetylated at 'Lys-87', promoting STAT3 recruitment to chromatin. In addition to acetylated lysines, also recognizes and binds lysine residues on histones that are both methylated and acetylated on the same side chain to form N6-acetyl-N6-methyllysine (Kacme), an epigenetic mark of active chromatin associated with increased transcriptional initiation. Specifically binds histone H4 acetyl-methylated at 'Lys-5' and 'Lys-12' (H4K5acme and H4K12acme, respectively). The protein is Bromodomain-containing protein 2 (Brd2) of Rattus norvegicus (Rat).